Here is a 1774-residue protein sequence, read N- to C-terminus: 6-methylsalicylic acid synthase (1774 aa).

Residues 1–14 (MHSAATSTYPSGKT) are compositionally biased toward polar residues. Positions 1–21 (MHSAATSTYPSGKTSPAPVGT) are disordered. The 426-residue stretch at 32 to 457 (SNDVAVVGMA…GTVSHAVIEE (426 aa)) folds into the Ketosynthase family 3 (KS3) domain. An acyltransferase region spans residues 186–238 (RISYHLNLMGPSTAVDAACASSLVAIHHGVQAIRLGESKVAIVGGVNALCGPG). Residues cysteine 204, histidine 339, and histidine 379 each act as for beta-ketoacyl synthase activity in the active site. An acetyl/malonyl transferases region spans residues 642–676 (NGITPQAVIGHSVGEIAASVVAGALSPAEGALIVT). Catalysis depends on serine 653, which acts as the For malonyltransferase activity. The interval 926–1045 (HTLLGQRIPV…AYWDRKVAGS (120 aa)) is N-terminal hotdog fold. The 277-residue stretch at 926-1202 (HTLLGQRIPV…FSEIEGTPGV (277 aa)) folds into the PKS/mFAS DH domain. Histidine 958 functions as the Proton acceptor; for dehydratase activity in the catalytic mechanism. The tract at residues 1059–1202 (VTKLADNFSI…FSEIEGTPGV (144 aa)) is C-terminal hotdog fold. Aspartate 1123 acts as the Proton donor; for dehydratase activity in catalysis. The segment at 1403-1450 (GPRLLPRPEGTYLITGGLGVLGLEVADFLVEKGARRLLLISRRALPPR) is 2-oxoacyl reductase. Residue 1419–1424 (GLGVLG) coordinates NADP(+). The 75-residue stretch at 1698-1772 (AYLDEKIRGC…HLAVWFAEKL (75 aa)) folds into the Carrier domain. Serine 1732 carries the O-(pantetheine 4'-phosphoryl)serine modification.

In terms of assembly, homomultimer.

It carries out the reaction 3 malonyl-CoA + acetyl-CoA + NADPH + 3 H(+) = 6-methylsalicylate + 3 CO2 + NADP(+) + 4 CoA + H2O. It participates in mycotoxin biosynthesis; patulin biosynthesis. Functionally, this multifunctional enzyme is a polyketide synthase. It catalyzes a total of 11 steps by seven different component enzymes, in the biosynthesis of the antibiotic patulin. This is 6-methylsalicylic acid synthase from Penicillium patulum (Penicillium griseofulvum).